Reading from the N-terminus, the 2473-residue chain is Neurogenic locus notch homolog protein 2 (2473 aa).

Positions 1-25 (MPALRPAALRALLWLWLCGAGPAHA) are cleaved as a signal peptide. 4 consecutive EGF-like domains span residues 26 to 63 (LQCRGGQEPCVNEGTCVTYHNGTGFCRCPEGFLGEYCQ), 64 to 102 (HRDPCEKNRCQNGGTCVPQGMLGKATCRCAPGFTGEDCQ), 105 to 143 (TSHPCFVSRPCQNGGTCHMLSRDTYECTCQVGFTGKQCQ), and 144 to 180 (WTDACLSHPCENGSTCTSVASQFSCKCPAGLTGQKCE). Topologically, residues 26 to 1679 (LQCRGGQEPC…SELESPRNAQ (1654 aa)) are extracellular. Intrachain disulfides connect Cys28-Cys41, Cys35-Cys51, Cys53-Cys62, Cys68-Cys79, Cys73-Cys90, Cys92-Cys101, Cys109-Cys121, Cys115-Cys131, Cys133-Cys142, Cys148-Cys159, Cys153-Cys168, Cys170-Cys179, Cys186-Cys198, Cys192-Cys207, Cys209-Cys218, Cys230-Cys246, Cys248-Cys257, Cys264-Cys275, Cys269-Cys284, Cys286-Cys295, Cys302-Cys315, Cys309-Cys324, Cys326-Cys335, Cys342-Cys353, Cys347-Cys362, Cys364-Cys373, Cys379-Cys390, Cys384-Cys401, Cys403-Cys412, Cys419-Cys433, Cys427-Cys442, Cys444-Cys453, Cys460-Cys471, Cys465-Cys480, Cys482-Cys491, Cys498-Cys509, Cys503-Cys518, Cys520-Cys529, Cys536-Cys547, Cys541-Cys556, Cys558-Cys567, Cys574-Cys584, Cys579-Cys593, Cys595-Cys604, Cys611-Cys622, Cys616-Cys631, Cys633-Cys642, Cys649-Cys659, Cys654-Cys668, Cys670-Cys679, Cys686-Cys697, Cys691-Cys706, Cys708-Cys717, Cys724-Cys734, Cys729-Cys743, Cys745-Cys754, Cys761-Cys772, Cys766-Cys781, Cys783-Cys792, Cys799-Cys810, Cys804-Cys819, Cys821-Cys830, Cys837-Cys848, Cys842-Cys859, Cys861-Cys870, Cys877-Cys888, Cys882-Cys897, Cys899-Cys908, Cys915-Cys926, Cys920-Cys935, Cys937-Cys946, Cys953-Cys964, Cys958-Cys973, Cys975-Cys984, Cys991-Cys1002, Cys996-Cys1011, Cys1013-Cys1022, Cys1029-Cys1040, Cys1034-Cys1049, Cys1051-Cys1060, Cys1067-Cys1078, Cys1072-Cys1087, and Cys1089-Cys1098. Asn46 carries N-linked (GlcNAc...) asparagine glycosylation. Asn155 carries an N-linked (GlcNAc...) asparagine glycan. Positions 182–219 (DINECDIPGRCQHGGTCLNLPGSYRCQCPQGFTGQHCD) constitute an EGF-like 5; calcium-binding domain. Residues 221–258 (PYVPCAPSPCVNGGTCRQTGDFTFECNCLPGFEGSTCE) form the EGF-like 6; incomplete domain. The region spanning 260 to 296 (NIDDCPNHKCQNGGVCVDGVNTYNCRCPPQWTGQFCT) is the EGF-like 7; calcium-binding domain. One can recognise an EGF-like 8; calcium-binding domain in the interval 298-336 (DVDECLLQPNACQNGGTCTNRNGGYGCVCVNGWSGDDCS). Residues 338 to 374 (NIDDCAYASCTPGSTCIDRVASFSCLCPEGKAGLLCH) enclose the EGF-like 9; calcium-binding domain. In terms of domain architecture, EGF-like 10 spans 375 to 413 (LDDACISNPCHKGALCDTNPLNGQYICTCPQGYKGADCT). In terms of domain architecture, EGF-like 11; calcium-binding spans 415 to 454 (DVDECAMANSNPCEHAGKCVNTDGAFHCECLKGYAGPRCE). Positions 456-492 (DINECHSDPCQNDATCLDKIGGFTCLCMPGFKGVHCE) constitute an EGF-like 12; calcium-binding domain. Residues 494-530 (EVNECQSNPCVNNGQCVDKVNRFQCLCPPGFTGPVCQ) form the EGF-like 13; calcium-binding domain. The EGF-like 14; calcium-binding domain maps to 532–568 (DIDDCSSTPCLNGAKCIDHPNGYECQCATGFTGILCD). In terms of domain architecture, EGF-like 15; calcium-binding spans 570–605 (NIDNCDPDPCHHGQCQDGIDSYTCICNPGYMGAICS). The EGF-like 16; calcium-binding domain occupies 607 to 643 (QIDECYSSPCLNDGRCIDLVNGYQCNCQPGTSGLNCE). Ser613 is a glycosylation site (O-linked (Glc...) serine; alternate). The O-linked (Xyl...) serine; alternate glycan is linked to Ser613. Residues 645-680 (NFDDCASNPCMHGVCVDGINRYSCVCSPGFTGQRCN) form the EGF-like 17; calcium-binding domain. The EGF-like 18; calcium-binding domain maps to 682-718 (DIDECASNPCRKGATCINDVNGFRCICPEGPHHPSCY). Positions 720–755 (QVNECLSNPCIHGNCTGGLSGYKCLCDAGWVGVNCE) constitute an EGF-like 19 domain. N-linked (GlcNAc...) asparagine glycosylation occurs at Asn733. The region spanning 757–793 (DKNECLSNPCQNGGTCNNLVNGYRCTCKKGFKGYNCQ) is the EGF-like 20; calcium-binding domain. The EGF-like 21; calcium-binding domain occupies 795–831 (NIDECASNPCLNQGTCFDDVSGYTCHCMLPYTGKNCQ). The region spanning 833–871 (VLAPCSPNPCENAAVCKEAPNFESFSCLCAPGWQGKRCT) is the EGF-like 22 domain. One can recognise an EGF-like 23; calcium-binding domain in the interval 873 to 909 (DVDECISKPCMNNGVCHNTQGSYVCECPPGFSGMDCE). The EGF-like 24; calcium-binding domain occupies 911 to 947 (DINDCLANPCQNGGSCVDHVNTFSCQCHPGFIGDKCQ). Residues 949-985 (DMNECLSEPCKNGGTCSDYVNSYTCTCPAGFHGVHCE) form the EGF-like 25; calcium-binding domain. Positions 987-1023 (NIDECTESSCFNGGTCVDGINSFSCLCPVGFTGPFCL) constitute an EGF-like 26; calcium-binding domain. Residues 1025-1061 (DINECSSNPCLNAGTCVDGLGTYRCICPLGYTGKNCQ) form the EGF-like 27; calcium-binding domain. 2 EGF-like domains span residues 1063–1099 (LVNLCSRSPCKNKGTCVQEKARPHCLCPPGWDGAYCD) and 1101–1147 (LNVS…SYCE). The N-linked (GlcNAc...) asparagine glycan is linked to Asn1102. Disulfide bonds link Cys1105-Cys1126, Cys1120-Cys1135, Cys1137-Cys1146, Cys1153-Cys1164, Cys1158-Cys1173, Cys1175-Cys1184, Cys1191-Cys1202, Cys1196-Cys1211, Cys1213-Cys1222, Cys1229-Cys1241, Cys1235-Cys1250, Cys1252-Cys1261, Cys1268-Cys1281, Cys1273-Cys1290, Cys1292-Cys1301, Cys1308-Cys1319, Cys1313-Cys1331, Cys1333-Cys1346, Cys1378-Cys1389, Cys1383-Cys1400, Cys1402-Cys1411, Cys1425-Cys1448, Cys1430-Cys1443, and Cys1439-Cys1455. The EGF-like 30; calcium-binding domain maps to 1149 to 1185 (QLDECASNPCQHGATCNDFIGGYRCECVPGYQGVNCE). Residues 1187–1223 (EVDECQNQPCQNGGTCIDLVNHFKCSCPPGTRGLLCE) form the EGF-like 31; calcium-binding domain. In terms of domain architecture, EGF-like 32; calcium-binding spans 1225 to 1262 (NIDECAGGPHCLNGGQCVDRIGGYTCRCLPGFAGERCE). 3 EGF-like domains span residues 1264–1302 (DINECLSNPCSSEGSLDCVQLKNNYNCICRSAFTGRHCE), 1304–1343 (FLDVCPQKPCLNGGTCAVASNMPDGFICRCPPGFSGARCQ), and 1375–1412 (ESGCASNPCQHGGTCYPQRQPPHYSCRCPPSFGGSHCE). LNR repeat units follow at residues 1425–1465 (CQSQ…PWAN), 1466–1502 (CTSTLRCWEYINNQCDEQCNTAECLFDNFECQRNSKT), and 1503–1544 (CKYD…NLAE). Residues 1425–1679 (CQSQYCADKA…SELESPRNAQ (255 aa)) are negative regulatory region (NRR). Residue Asn1465 is glycosylated (N-linked (GlcNAc...) asparagine). 7 disulfides stabilise this stretch: Cys1466-Cys1489, Cys1472-Cys1484, Cys1480-Cys1496, Cys1503-Cys1527, Cys1509-Cys1522, Cys1518-Cys1534, and Cys1634-Cys1641. The chain crosses the membrane as a helical span at residues 1680-1700 (LLYLLAVAVVIILFFILLGVI). The Cytoplasmic portion of the chain corresponds to 1701–2473 (MAKRKRKHGF…PPHSNMQVYA (773 aa)). Position 1718 is a phosphothreonine (Thr1718). The interval 1755–1778 (GTSEHWVDDEGPQPKKAKAEDEAL) is disordered. The residue at position 1780 (Ser1780) is a Phosphoserine. Position 1803 is a phosphothreonine (Thr1803). Residue Ser1805 is modified to Phosphoserine. Thr1809 is subject to Phosphothreonine. ANK repeat units lie at residues 1828–1872 (DGCT…SLQA), 1877–1906 (TGEMALHLAARYSRADAAKRLLDAGADANA), 1910–1940 (MGRCPLHAAVAADAQGVFQILIRNRVTDLDA), 1944–1973 (DGTTPLILAARLAVEGMVAELINCQADVNA), 1977–2006 (HGKSALHWAAAVNNVEATLLLLKNGANRDM), and 2010–2039 (KEETPLFLAAREGSYEAAKILLDHFANRDI). Ser1843 and Ser1846 each carry phosphoserine. Phosphoserine is present on residues Ser2071, Ser2079, and Ser2082. Thr2098 is subject to Phosphothreonine. Disordered stretches follow at residues 2098 to 2117 (TPMGKKARRPNTKSTMPTSL), 2122 to 2169 (KEAK…TSSP), and 2382 to 2473 (VGKY…QVYA). Residues 2099-2108 (PMGKKARRPN) are compositionally biased toward basic residues. Composition is skewed to polar residues over residues 2140–2151 (VQLSESSVTLSP) and 2390–2400 (SQHSYASSNAA). The span at 2419–2446 (PSPESPDQWSSSSPHSASDWSDVTTSPT) shows a compositional bias: low complexity. The segment covering 2447–2456 (PGGGGGGQRG) has biased composition (gly residues).

This sequence belongs to the NOTCH family. Heterodimer of a C-terminal fragment N(TM) and an N-terminal fragment N(EC) which are probably linked by disulfide bonds. Interacts with MAML1, MAML2 and MAML3 which act as transcriptional coactivators for NOTCH2. Interacts with RELA/p65. Interacts with HIF1AN. Interacts (via ANK repeats) with TCIM, the interaction inhibits the nuclear translocation of NOTCH2 N2ICD. Interacts with CUL1, RBX1, SKP1 and FBXW7 that are SCF(FBXW7) E3 ubiquitin-protein ligase complex components. Interacts with MINAR1; this interaction increases MINAR1 stability and function. Interacts with MDK; this interaction mediates a nuclear accumulation of NOTCH2 and therefore activation of NOTCH2 signaling leading to interaction between HES1 and STAT3. Interacts with MINAR2. Synthesized in the endoplasmic reticulum as an inactive form which is proteolytically cleaved by a furin-like convertase in the trans-Golgi network before it reaches the plasma membrane to yield an active, ligand-accessible form. Cleavage results in a C-terminal fragment N(TM) and a N-terminal fragment N(EC). Following ligand binding, it is cleaved by TNF-alpha converting enzyme (TACE) to yield a membrane-associated intermediate fragment called notch extracellular truncation (NEXT). This fragment is then cleaved by presenilin dependent gamma-secretase to release a notch-derived peptide containing the intracellular domain (NICD) from the membrane. Post-translationally, hydroxylated by HIF1AN. In terms of processing, can be either O-glucosylated or O-xylosylated at Ser-613 by POGLUT1. Phosphorylated by GSK3. GSK3-mediated phosphorylation is necessary for NOTCH2 recognition by FBXW7, ubiquitination and degradation via the ubiquitin proteasome pathway. As to expression, expressed in the brain, liver, kidney, neuroepithelia, somites, optic vesicles and branchial arches, but not heart.

The protein localises to the cell membrane. Its subcellular location is the nucleus. The protein resides in the cytoplasm. In terms of biological role, functions as a receptor for membrane-bound ligands Jagged-1 (JAG1), Jagged-2 (JAG2) and Delta-1 (DLL1) to regulate cell-fate determination. Upon ligand activation through the released notch intracellular domain (NICD) it forms a transcriptional activator complex with RBPJ/RBPSUH and activates genes of the enhancer of split locus. Affects the implementation of differentiation, proliferation and apoptotic programs. May play an essential role in postimplantation development, probably in some aspect of cell specification and/or differentiation. In collaboration with RELA/p65 enhances NFATc1 promoter activity and positively regulates RANKL-induced osteoclast differentiation. Positively regulates self-renewal of liver cancer cells. The polypeptide is Neurogenic locus notch homolog protein 2 (Mus musculus (Mouse)).